The following is a 383-amino-acid chain: Lipid-A-disaccharide synthase (383 aa).

Belongs to the LpxB family.

The catalysed reaction is 2-N,3-O-bis[(3R)-3-hydroxytetradecanoyl]-alpha-D-glucosaminyl 1-phosphate + UDP-2-N,3-O-bis[(3R)-3-hydroxytetradecanoyl]-alpha-D-glucosamine = lipid A disaccharide (E. coli) + UDP + H(+). It catalyses the reaction a lipid X + a UDP-2-N,3-O-bis[(3R)-3-hydroxyacyl]-alpha-D-glucosamine = a lipid A disaccharide + UDP + H(+). It participates in glycolipid biosynthesis; lipid IV(A) biosynthesis; lipid IV(A) from (3R)-3-hydroxytetradecanoyl-[acyl-carrier-protein] and UDP-N-acetyl-alpha-D-glucosamine: step 5/6. Functionally, condensation of UDP-2,3-diacylglucosamine and 2,3-diacylglucosamine-1-phosphate to form lipid A disaccharide, a precursor of lipid A, a phosphorylated glycolipid that anchors the lipopolysaccharide to the outer membrane of the cell. The sequence is that of Lipid-A-disaccharide synthase from Klebsiella pneumoniae (strain 342).